The following is a 715-amino-acid chain: Mitochondrial division protein 1 (715 aa).

Positions 122 to 147 (AAATSGKLVTEKGEKGKKKRAETAHA) are disordered. Positions 228–268 (IKNLKGAVQTITDNLDLLEIQKNLAASEIRELDLKMEKLKL) form a coiled coil. The interval 313–380 (EKAYEEATSA…HKNHEKKVQQ (68 aa)) is disordered. Positions 347–358 (QEPQVNLASAQK) are enriched in polar residues. The span at 359-375 (SLKKRSKQTGYSHKNHE) shows a compositional bias: basic residues. 7 WD repeats span residues 409–449 (AHED…HVAS), 452–490 (GHLATVSCMQMDQYNTLITGGRDALLKMWDIQKAIDNDS), 503–542 (SHIDEITALSFEANNLVSGSQDRTIRQWDLNNGKCVQTLD), 564–604 (NNDH…RTLE), 605–644 (GHSDAVTSLQFDSLNLVTGSLDNSIRIWDLRTGTLADTFS), 646–681 (EHPVTCLQFDLNKIVVANQEGTVKVYNRQEKKHWFC), and 685–715 (EHSENAVEYVRYKDGYLVEGRANGDINAWAI).

It belongs to the WD repeat MDV1/CAF4 family.

Its subcellular location is the mitochondrion outer membrane. In terms of biological role, involved in mitochondrial fission. Acts as an adapter protein required to form mitochondrial fission complexes. Formation of these complexes is required to promote constriction and fission of the mitochondrial compartment at a late step in mitochondrial division. This chain is Mitochondrial division protein 1 (MDV1), found in Eremothecium gossypii (strain ATCC 10895 / CBS 109.51 / FGSC 9923 / NRRL Y-1056) (Yeast).